Consider the following 147-residue polypeptide: uncharacterized protein (147 aa).

In terms of domain architecture, N-acetyltransferase spans 7 to 147; it reads LEINYKTDEL…GHDVLVWAPK (141 aa).

This is an uncharacterized protein from Staphylococcus haemolyticus (strain JCSC1435).